We begin with the raw amino-acid sequence, 393 residues long: NAD(P)H-quinone oxidoreductase subunit H, chloroplastic (393 aa).

This sequence belongs to the complex I 49 kDa subunit family. In terms of assembly, NDH is composed of at least 16 different subunits, 5 of which are encoded in the nucleus.

It is found in the plastid. Its subcellular location is the chloroplast thylakoid membrane. The enzyme catalyses a plastoquinone + NADH + (n+1) H(+)(in) = a plastoquinol + NAD(+) + n H(+)(out). It carries out the reaction a plastoquinone + NADPH + (n+1) H(+)(in) = a plastoquinol + NADP(+) + n H(+)(out). In terms of biological role, NDH shuttles electrons from NAD(P)H:plastoquinone, via FMN and iron-sulfur (Fe-S) centers, to quinones in the photosynthetic chain and possibly in a chloroplast respiratory chain. The immediate electron acceptor for the enzyme in this species is believed to be plastoquinone. Couples the redox reaction to proton translocation, and thus conserves the redox energy in a proton gradient. The sequence is that of NAD(P)H-quinone oxidoreductase subunit H, chloroplastic from Sorghum bicolor (Sorghum).